Reading from the N-terminus, the 69-residue chain is MLKMGVLLFIFLVLFPLTTLELDTDRPVERHAAIKQDLKPQERRGIRLHAPRDECCEPQWCDGACDCCS.

The first 20 residues, 1–20 (MLKMGVLLFIFLVLFPLTTL), serve as a signal peptide directing secretion. The propeptide occupies 21–54 (ELDTDRPVERHAAIKQDLKPQERRGIRLHAPRDE). Disulfide bonds link cysteine 55/cysteine 67, cysteine 56/cysteine 65, and cysteine 61/cysteine 68.

Belongs to the conotoxin M superfamily. In terms of tissue distribution, expressed by the venom duct.

The protein localises to the secreted. This is Conotoxin Lp3.1 from Conus leopardus (Leopard cone).